Here is a 146-residue protein sequence, read N- to C-terminus: D-aminoacyl-tRNA deacylase (146 aa).

The Gly-cisPro motif, important for rejection of L-amino acids signature appears at 137 to 138; that stretch reads GP.

It belongs to the DTD family. In terms of assembly, homodimer.

It is found in the cytoplasm. The enzyme catalyses glycyl-tRNA(Ala) + H2O = tRNA(Ala) + glycine + H(+). The catalysed reaction is a D-aminoacyl-tRNA + H2O = a tRNA + a D-alpha-amino acid + H(+). Functionally, an aminoacyl-tRNA editing enzyme that deacylates mischarged D-aminoacyl-tRNAs. Also deacylates mischarged glycyl-tRNA(Ala), protecting cells against glycine mischarging by AlaRS. Acts via tRNA-based rather than protein-based catalysis; rejects L-amino acids rather than detecting D-amino acids in the active site. By recycling D-aminoacyl-tRNA to D-amino acids and free tRNA molecules, this enzyme counteracts the toxicity associated with the formation of D-aminoacyl-tRNA entities in vivo and helps enforce protein L-homochirality. The chain is D-aminoacyl-tRNA deacylase from Halalkalibacterium halodurans (strain ATCC BAA-125 / DSM 18197 / FERM 7344 / JCM 9153 / C-125) (Bacillus halodurans).